The sequence spans 24 residues: Fibrinogen gamma chain (24 aa).

In terms of assembly, heterohexamer; disulfide linked. Contains 2 sets of 3 non-identical chains (alpha, beta and gamma). The 2 heterotrimers are in head to head conformation with the N-termini in a small central domain. Post-translationally, conversion of fibrinogen to fibrin is triggered by thrombin, which cleaves fibrinopeptides A and B from alpha and beta chains, and thus exposes the N-terminal polymerization sites responsible for the formation of the soft clot. The soft clot is converted into the hard clot by factor XIIIA which catalyzes the epsilon-(gamma-glutamyl)lysine cross-linking between gamma chains (stronger) and between alpha chains (weaker) of different monomers.

The protein resides in the secreted. In terms of biological role, together with fibrinogen alpha (FGA) and fibrinogen beta (FGB), polymerizes to form an insoluble fibrin matrix. Has a major function in hemostasis as one of the primary components of blood clots. In addition, functions during the early stages of wound repair to stabilize the lesion and guide cell migration during re-epithelialization. Was originally thought to be essential for platelet aggregation, based on in vitro studies using anticoagulated blood. However, subsequent studies have shown that it is not absolutely required for thrombus formation in vivo. Enhances expression of SELP in activated platelets via an ITGB3-dependent pathway. Maternal fibrinogen is essential for successful pregnancy. Fibrin deposition is also associated with infection, where it protects against IFNG-mediated hemorrhage. May also facilitate the antibacterial immune response via both innate and T-cell mediated pathways. The sequence is that of Fibrinogen gamma chain (FGG) from Canis lupus familiaris (Dog).